The chain runs to 755 residues: Dynamin-1-like protein (755 aa).

Methionine 1 is subject to N-acetylmethionine. Residues 22–315 (IIQLPQIVVV…LMHHIRDCLP (294 aa)) form the Dynamin-type G domain. The segment at 32–39 (GTQSSGKS) is G1 motif. 32 to 40 (GTQSSGKSS) lines the GTP pocket. A G2 motif region spans residues 58–60 (VTR). The tract at residues 159-162 (DLPG) is G3 motif. The segment at 228-231 (TKLD) is G4 motif. GTP contacts are provided by residues 228–234 (TKLDLMD) and 259–262 (NRSQ). Residues 258–261 (VNRS) are G5 motif. The tract at residues 357 to 502 (YCNTIEGTAK…NEMVHNLVAI (146 aa)) is middle domain. The interval 461 to 704 (NYSTQELLRF…NHVKDTLQSE (244 aa)) is interaction with GSK3B. The interval 515 to 582 (ADACGLMNNN…IQDNRRETKN (68 aa)) is b domain. The tract at residues 536-610 (ELPSAVSRDK…QEPTTGNWRG (75 aa)) is disordered. At serine 542 the chain carries Phosphoserine. Residues lysine 545 and lysine 548 each participate in a glycyl lysine isopeptide (Lys-Gly) (interchain with G-Cter in SUMO) cross-link. The segment covering 550–567 (PSALAPASQEPSPAASAE) has biased composition (low complexity). Position 561 is a phosphoserine (serine 561). The segment covering 568-581 (ADGKLIQDNRRETK) has biased composition (basic and acidic residues). Residues lysine 571 and lysine 581 each participate in a glycyl lysine isopeptide (Lys-Gly) (interchain with G-Cter in SUMO) cross-link. The segment covering 586–600 (AGGGIGDGGRIGDGG) has biased composition (gly residues). O-linked (GlcNAc) threonine glycosylation is found at threonine 604 and threonine 605. Lysine 613 is covalently cross-linked (Glycyl lysine isopeptide (Lys-Gly) (interchain with G-Cter in SUMO)). At lysine 616 the chain carries N6-acetyllysine; alternate. Lysine 616 is covalently cross-linked (Glycyl lysine isopeptide (Lys-Gly) (interchain with G-Cter in SUMO); alternate). Residue lysine 625 forms a Glycyl lysine isopeptide (Lys-Gly) (interchain with G-Cter in SUMO) linkage. Serine 626 bears the Phosphoserine mark. Lysine 627 is covalently cross-linked (Glycyl lysine isopeptide (Lys-Gly) (interchain with G-Cter in SUMO)). Serine 635 is modified (phosphoserine; by CDK1). At serine 656 the chain carries Phosphoserine; by CAMK1 and PKA. Cysteine 663 is modified (S-nitrosocysteine). The GED domain maps to 663–754 (CEVIERLIKS…IIAEIRETHL (92 aa)). The important for homodimerization stretch occupies residues 673-687 (YFLIVRKNIQDSVPK).

The protein belongs to the TRAFAC class dynamin-like GTPase superfamily. Dynamin/Fzo/YdjA family. As to quaternary structure, homotetramer; dimerizes through the N-terminal GTP-middle region of one molecule binding to the GED domain of another DNM1L molecule. Oligomerizes in a GTP-dependent manner to form membrane-associated tubules with a spiral pattern. Interacts with GSK3B and MARCHF5. Interacts (via the GTPase and B domains) with UBE2I; the interaction promotes sumoylation of DNM1L, mainly in its B domain. Interacts with PPP3CA; the interaction dephosphorylates DNM1L and regulates its transition to mitochondria. Interacts with BCL2L1 isoform BCL-X(L) and CLTA; DNM1L and BCL2L1 isoform BCL-X(L) may form a complex in synaptic vesicles that also contains clathrin and MFF. Interacts with MFF; the interaction is inhinited by C11orf65/MFI. Interacts with FIS1. Interacts with MIEF2 and MIEF1; GTP-dependent this regulates GTP hydrolysis and DNM1L oligomerization. Interacts with PGAM5; this interaction leads to dephosphorylation at Ser-656 and activation of GTPase activity and eventually to mitochondria fragmentation. Interacts with RALBP1; during mitosis, recruits DNM1L to the mitochondrion and mediates its activation by the mitotic kinase cyclin B-CDK1. Interacts with FUNDC1; this interaction recruits DNM1L/DRP1 at ER-mitochondria contact sites. Phosphorylation/dephosphorylation events on two sites near the GED domain regulate mitochondrial fission. Phosphorylation on Ser-656 by CAMK1 and PKA inhibits the GTPase activity, leading to a defect in mitochondrial fission promoting mitochondrial elongation. Dephosphorylated on this site by PPP3CA which promotes mitochondrial fission. Phosphorylation on Ser-635 by PINK1 activates the GTPase activity and promotes mitochondrial fission. Phosphorylation on Ser-635 by CDK1 also promotes mitochondrial fission. Phosphorylated in a circadian manner at Ser-656. Dephosphorylated by PGAM5. Post-translationally, sumoylated on various lysine residues within the B domain, probably by MUL1. Sumoylation positively regulates mitochondrial fission. Desumoylated by SENP5 during G2/M transition of mitosis. Appears to be linked to its catalytic activity. In terms of processing, S-nitrosylation increases DNM1L dimerization, mitochondrial fission and causes neuronal damage. O-GlcNAcylation augments the level of the GTP-bound active form of DNM1L and induces translocation from the cytoplasm to mitochondria in cardiomyocytes. It also decreases phosphorylation at Ser-656. Post-translationally, ubiquitination by MARCHF5 affects mitochondrial morphology. Expressed in all tissues tested (at protein level). Longer isoforms are preferentially expressed in brain.

It localises to the cytoplasm. The protein localises to the cytosol. Its subcellular location is the golgi apparatus. The protein resides in the endomembrane system. It is found in the mitochondrion outer membrane. It localises to the peroxisome. The protein localises to the membrane. Its subcellular location is the clathrin-coated pit. The protein resides in the cytoplasmic vesicle. It is found in the secretory vesicle. It localises to the synaptic vesicle membrane. It carries out the reaction GTP + H2O = GDP + phosphate + H(+). In terms of biological role, functions in mitochondrial and peroxisomal division. Mediates membrane fission through oligomerization into membrane-associated tubular structures that wrap around the scission site to constrict and sever the mitochondrial membrane through a GTP hydrolysis-dependent mechanism. The specific recruitment at scission sites is mediated by membrane receptors like MFF, MIEF1 and MIEF2 for mitochondrial membranes. While the recruitment by the membrane receptors is GTP-dependent, the following hydrolysis of GTP induces the dissociation from the receptors and allows DNM1L filaments to curl into closed rings that are probably sufficient to sever a double membrane. Acts downstream of PINK1 to promote mitochondrial fission in a PRKN-dependent manner. Plays an important role in mitochondrial fission during mitosis. Through its function in mitochondrial division, ensures the survival of at least some types of postmitotic neurons, including Purkinje cells, by suppressing oxidative damage. Required for normal brain development, including that of cerebellum. Facilitates developmentally regulated apoptosis during neural tube formation. Required for a normal rate of cytochrome c release and caspase activation during apoptosis; this requirement may depend upon the cell type and the physiological apoptotic cues. Required for formation of endocytic vesicles. Proposed to regulate synaptic vesicle membrane dynamics through association with BCL2L1 isoform Bcl-X(L) which stimulates its GTPase activity in synaptic vesicles; the function may require its recruitment by MFF to clathrin-containing vesicles. Required for programmed necrosis execution. Rhythmic control of its activity following phosphorylation at Ser-656 is essential for the circadian control of mitochondrial ATP production. The protein is Dynamin-1-like protein of Rattus norvegicus (Rat).